Reading from the N-terminus, the 429-residue chain is Glutamyl-tRNA reductase (429 aa).

Residues threonine 49–arginine 52, serine 107, glutamate 112–glutamine 114, and glutamine 118 contribute to the substrate site. Residue cysteine 50 is the Nucleophile of the active site. Glycine 187–isoleucine 192 serves as a coordination point for NADP(+).

Belongs to the glutamyl-tRNA reductase family. In terms of assembly, homodimer.

It catalyses the reaction (S)-4-amino-5-oxopentanoate + tRNA(Glu) + NADP(+) = L-glutamyl-tRNA(Glu) + NADPH + H(+). It participates in porphyrin-containing compound metabolism; protoporphyrin-IX biosynthesis; 5-aminolevulinate from L-glutamyl-tRNA(Glu): step 1/2. Its function is as follows. Catalyzes the NADPH-dependent reduction of glutamyl-tRNA(Glu) to glutamate 1-semialdehyde (GSA). The sequence is that of Glutamyl-tRNA reductase from Pseudomonas fluorescens (strain SBW25).